The primary structure comprises 424 residues: MPSLFAQSLAIIATLQATLGLATPVSAPDTVTGKHAGGYVNAVYFTNWGIYGRNYQPADLPASQISHVLYSFLNLSNNGTVYSGDSWADIDKHYPNDSWNDVGNNVYGCVKQLYLLKKANRNMKTMLSIGGWTWSTNFPAAASTAATRSNFAKSAVTIMKDWGFDGIDVDWEYPADDAQAANMVLLLQAVRDELDAYAAKFAQGYHFQLSIAAPAGPANYNKLHLGDLGKVLDYINLMAYDFSGSWSNSSAHNANLYANPGNLNATPFNTDDAVNDYIKGGVPASKIVLGMPIYGKSFQKTNGIGKPFSGVGDGSWENGIWDYKVLPKAGATVIYDDVAKGYYSYDNRTQELISYDTPDITKEKVTYLKSKGLGGSMFWEASADRQGPDSLIGTSSNKLGGPDTTENLLNYPDSKYDNMRKQMA.

The N-terminal stretch at 1 to 22 is a signal peptide; that stretch reads MPSLFAQSLAIIATLQATLGLA. Residues 39–402 form the GH18 domain; that stretch reads YVNAVYFTNW…GTSSNKLGGP (364 aa). 3 N-linked (GlcNAc...) asparagine glycosylation sites follow: asparagine 74, asparagine 78, and asparagine 96. Chitin is bound by residues 103-104 and 130-133; these read GN and GGWT. Glutamate 172 functions as the Proton donor in the catalytic mechanism. Residues tyrosine 173 and 238 to 241 contribute to the chitin site; that span reads MAYD. 2 N-linked (GlcNAc...) asparagine glycosylation sites follow: asparagine 248 and asparagine 347. Tryptophan 379 lines the chitin pocket. The disordered stretch occupies residues 385 to 412; it reads RQGPDSLIGTSSNKLGGPDTTENLLNYP. The segment covering 392-408 has biased composition (polar residues); sequence IGTSSNKLGGPDTTENL.

The protein belongs to the glycosyl hydrolase 18 family. Chitinase class V subfamily.

The protein localises to the secreted. It catalyses the reaction Random endo-hydrolysis of N-acetyl-beta-D-glucosaminide (1-&gt;4)-beta-linkages in chitin and chitodextrins.. Functionally, secreted chitinase involved in the degradation of chitin, a component of the cell walls of fungi and exoskeletal elements of some animals (including worms and arthropods). Participates in the infection process and directly acts in the penetration process of the host cuticle. This chain is Endochitinase 1 (chit1), found in Metarhizium robertsii (strain ARSEF 23 / ATCC MYA-3075) (Metarhizium anisopliae (strain ARSEF 23)).